We begin with the raw amino-acid sequence, 507 residues long: uncharacterized protein (507 aa).

Positions methionine 1–serine 12 are enriched in low complexity. The tract at residues methionine 1–aspartate 20 is disordered. The next 12 membrane-spanning stretches (helical) occupy residues phenylalanine 57–leucine 74, isoleucine 100–tyrosine 120, alanine 126–valine 146, tryptophan 157–phenylalanine 177, isoleucine 189–phenylalanine 209, tyrosine 221–leucine 241, valine 283–leucine 303, leucine 326–serine 346, glycine 353–isoleucine 373, isoleucine 379–leucine 399, valine 416–phenylalanine 436, and valine 445–isoleucine 465.

The protein belongs to the major facilitator superfamily. Allantoate permease family.

It is found in the endoplasmic reticulum. The protein localises to the membrane. This is an uncharacterized protein from Schizosaccharomyces pombe (strain 972 / ATCC 24843) (Fission yeast).